The primary structure comprises 142 residues: Large-conductance mechanosensitive channel (142 aa).

3 helical membrane passes run 19 to 39 (VGII…ADLV), 41 to 61 (PFIA…ALDG), and 78 to 98 (FAFG…FVVF).

It belongs to the MscL family. In terms of assembly, homopentamer.

It localises to the cell inner membrane. Channel that opens in response to stretch forces in the membrane lipid bilayer. May participate in the regulation of osmotic pressure changes within the cell. The sequence is that of Large-conductance mechanosensitive channel from Roseobacter denitrificans (strain ATCC 33942 / OCh 114) (Erythrobacter sp. (strain OCh 114)).